We begin with the raw amino-acid sequence, 207 residues long: ATP-dependent dethiobiotin synthetase BioD (207 aa).

13 to 18 (EVGKTV) lines the ATP pocket. Thr-17 lines the Mg(2+) pocket. Lys-33 is an active-site residue. ATP-binding positions include Asp-44 and 100 to 103 (EGAG). Residues Asp-44 and Glu-100 each coordinate Mg(2+).

It belongs to the dethiobiotin synthetase family. Homodimer. It depends on Mg(2+) as a cofactor.

Its subcellular location is the cytoplasm. The catalysed reaction is (7R,8S)-7,8-diammoniononanoate + CO2 + ATP = (4R,5S)-dethiobiotin + ADP + phosphate + 3 H(+). The protein operates within cofactor biosynthesis; biotin biosynthesis; biotin from 7,8-diaminononanoate: step 1/2. Its function is as follows. Catalyzes a mechanistically unusual reaction, the ATP-dependent insertion of CO2 between the N7 and N8 nitrogen atoms of 7,8-diaminopelargonic acid (DAPA, also called 7,8-diammoniononanoate) to form a ureido ring. The sequence is that of ATP-dependent dethiobiotin synthetase BioD from Christiangramia forsetii (strain DSM 17595 / CGMCC 1.15422 / KT0803) (Gramella forsetii).